We begin with the raw amino-acid sequence, 1106 residues long: Probable ATP-citrate synthase (1106 aa).

The citrate site is built by N358, T360, and R391. Positions A442 to G459 are enriched in polar residues. Residues A442–L478 form a disordered region. ATP is bound by residues V701 to G721 and I752 to A778. Residue E718 coordinates Mg(2+). Residue H760 is the Tele-phosphohistidine intermediate of the active site. L779–S789 lines the CoA pocket.

It in the N-terminal section; belongs to the succinate/malate CoA ligase beta subunit family. This sequence in the C-terminal section; belongs to the succinate/malate CoA ligase alpha subunit family. As to quaternary structure, homotetramer.

The protein resides in the cytoplasm. It carries out the reaction oxaloacetate + acetyl-CoA + ADP + phosphate = citrate + ATP + CoA. Catalyzes the cleavage of citrate into oxaloacetate and acetyl-CoA, the latter serving as common substrate in multiple biochemical reactions in protein, carbohydrate and lipid metabolism. The protein is Probable ATP-citrate synthase of Caenorhabditis elegans.